Here is a 71-residue protein sequence, read N- to C-terminus: Putative membrane protein insertion efficiency factor (71 aa).

Belongs to the UPF0161 family.

The protein localises to the cell inner membrane. Functionally, could be involved in insertion of integral membrane proteins into the membrane. The polypeptide is Putative membrane protein insertion efficiency factor (Nitrosospira multiformis (strain ATCC 25196 / NCIMB 11849 / C 71)).